The sequence spans 114 residues: MNSQNPDDHEDTTVVGFEVPVSPVSSYNNVYSSTEDETRDPPAVPPHLQHSLLGNQGSMELAYAPQNVVLNHLYIENRDAPRSVVALGFSHRFRTKFVTVVIYKPVQRRGSANV.

Positions 26-50 (SYNNVYSSTEDETRDPPAVPPHLQH) are disordered. Positions 40–114 (DPPAVPPHLQ…PVQRRGSANV (75 aa)) are association with SNF1 complex (ASC).

This sequence belongs to the 5'-AMP-activated protein kinase beta subunit family. In terms of assembly, subunit of a probable heterotrimeric complex consisting of an alpha catalytic (KIN10 or KIN11) subunit, and a beta (KINB) and a gamma (KING or SNF4) non-catalytic regulatory subunits. Interacts with KIN10, KIN11 and SNF4. Interacts with FLZ1, FLZ2, FLZ3, FLZ4, FLZ5, FLZ7, FLZ8, FLZ10, FLZ13, FLZ14, FLZ15 and FLZ16. In terms of tissue distribution, expressed in rosette (at the protein level). Expressed in the whole plant and at the different developmental stage with a higher level in stems.

Functionally, regulatory subunit of the probable trimeric SNF1-related protein kinase (SnRK) complex, which may play a role in a signal transduction cascade regulating gene expression and carbohydrate metabolism in higher plants. The polypeptide is SNF1-related protein kinase regulatory subunit beta-3 (KINB3) (Arabidopsis thaliana (Mouse-ear cress)).